The following is a 205-amino-acid chain: Urease accessory protein UreG (205 aa).

Residue 10–17 participates in GTP binding; that stretch reads GPVGAGKT.

The protein belongs to the SIMIBI class G3E GTPase family. UreG subfamily. Homodimer. UreD, UreF and UreG form a complex that acts as a GTP-hydrolysis-dependent molecular chaperone, activating the urease apoprotein by helping to assemble the nickel containing metallocenter of UreC. The UreE protein probably delivers the nickel.

The protein resides in the cytoplasm. Functionally, facilitates the functional incorporation of the urease nickel metallocenter. This process requires GTP hydrolysis, probably effectuated by UreG. This is Urease accessory protein UreG from Corynebacterium glutamicum (strain R).